Consider the following 346-residue polypeptide: DNA-directed RNA polymerases I and III subunit RPAC1 (346 aa).

Alanine 2 bears the N-acetylalanine mark.

This sequence belongs to the archaeal Rpo3/eukaryotic RPB3 RNA polymerase subunit family. As to quaternary structure, component of the RNA polymerase I and RNA polymerase III complexes consisting of at least 13 and 17 subunits, respectively. Pol I complex consists of a ten-subunit catalytic core composed of POLR1A/RPA1, POLR1B/RPA2, POLR1C/RPAC1, POLR1D/RPAC2, POLR1H/RPA12, POLR2E/RPABC1, POLR2F/RPABC2, POLR2H/RPABC3, POLR2K/RPABC4 and POLR2L/RPABC5; a mobile stalk subunit POLR1F/RPA43 protruding from the core and additional subunits homologous to general transcription factors POLR1E/RPA49 and POLR1G/RPA34. Part of Pol I pre-initiation complex (PIC), in which Pol I core assembles with RRN3 and promoter-bound UTBF and SL1/TIF-IB complex. Pol III complex consists of a ten-subunit catalytic core composed of POLR3A/RPC1, POLR3B/RPC2, POLR1C/RPAC1, POLR1D/RPAC2, POLR3K/RPC10, POLR2E/RPABC1, POLR2F/RPABC2, POLR2H/RPABC3, POLR2K/RPABC4 and POLR2L/RPABC5; a mobile stalk composed of two subunits POLR3H/RPC8 and CRCP/RPC9, protruding from the core and functioning primarily in transcription initiation; and additional subunits homologous to general transcription factors of the RNA polymerase II machinery, POLR3C/RPC3-POLR3F/RPC6-POLR3G/RPC7 heterotrimer required for transcription initiation and POLR3D/RPC4-POLR3E/RPC5 heterodimer involved in both transcription initiation and termination.

The protein localises to the nucleus. It is found in the cytoplasm. It localises to the cytosol. Functionally, DNA-dependent RNA polymerase catalyzes the transcription of DNA into RNA using the four ribonucleoside triphosphates as substrates. Common component of RNA polymerases I and III which synthesize ribosomal RNA precursors and short non-coding RNAs including 5S rRNA, snRNAs, tRNAs and miRNAs, respectively. POLR1C/RPAC1 is part of the polymerase core and may function as a clamp element that moves to open and close the cleft. This chain is DNA-directed RNA polymerases I and III subunit RPAC1, found in Mus musculus (Mouse).